We begin with the raw amino-acid sequence, 394 residues long: Elongation factor Tu (394 aa).

A tr-type G domain is found at 10–204 (KPHVNVGTIG…AMDDYIPAPE (195 aa)). The interval 19-26 (GHVDHGKT) is G1. Position 19-26 (19-26 (GHVDHGKT)) interacts with GTP. T26 lines the Mg(2+) pocket. Residues 60-64 (GITIN) form a G2 region. The tract at residues 81–84 (DCPG) is G3. Residues 81–85 (DCPGH) and 136–139 (NKCD) contribute to the GTP site. Residues 136 to 139 (NKCD) form a G4 region. The tract at residues 174 to 176 (SAL) is G5.

The protein belongs to the TRAFAC class translation factor GTPase superfamily. Classic translation factor GTPase family. EF-Tu/EF-1A subfamily. As to quaternary structure, monomer.

It localises to the cytoplasm. The enzyme catalyses GTP + H2O = GDP + phosphate + H(+). GTP hydrolase that promotes the GTP-dependent binding of aminoacyl-tRNA to the A-site of ribosomes during protein biosynthesis. This Francisella tularensis subsp. holarctica (strain FTNF002-00 / FTA) protein is Elongation factor Tu.